The following is a 154-amino-acid chain: MPLYEHVLLARQDVTSQQVETMIDTYKGVIEQNGGRLEKIEMWGVKSLAYRIKKNRKAHFALLNIDAPPAAIAEMERQMQISEDVLRFMTIRVEELDSEPSAMMQKRDRDDRKDRERGRRRDDEGFGGGGGFGGDRGDRGDRGDRGERSFGGEG.

Residues D97–G154 form a disordered region. Composition is skewed to basic and acidic residues over residues Q105 to E124 and D135 to G154.

This sequence belongs to the bacterial ribosomal protein bS6 family.

Binds together with bS18 to 16S ribosomal RNA. The sequence is that of Small ribosomal subunit protein bS6 from Methylobacterium radiotolerans (strain ATCC 27329 / DSM 1819 / JCM 2831 / NBRC 15690 / NCIMB 10815 / 0-1).